Here is a 181-residue protein sequence, read N- to C-terminus: MRILGIDPGLRTTGFGVLEKHGNKLSYIASGTIKSNGETDLPARLKTLFDGISEVARTYTPDCAAIEKVFVNVNPQSTLLLGQARGAAICGLVGQGLPVFEYTALQLKVAVVGYGRANKEQVQEMVMRLLSLPGRPSTDAADALGVAICHANGGDTLGTLSGLAPELVRKGMRVRRGRLIG.

Residues D7, E67, and D139 contribute to the active site. Residues D7, E67, and D139 each contribute to the Mg(2+) site.

It belongs to the RuvC family. As to quaternary structure, homodimer which binds Holliday junction (HJ) DNA. The HJ becomes 2-fold symmetrical on binding to RuvC with unstacked arms; it has a different conformation from HJ DNA in complex with RuvA. In the full resolvosome a probable DNA-RuvA(4)-RuvB(12)-RuvC(2) complex forms which resolves the HJ. Mg(2+) serves as cofactor.

It is found in the cytoplasm. It carries out the reaction Endonucleolytic cleavage at a junction such as a reciprocal single-stranded crossover between two homologous DNA duplexes (Holliday junction).. Functionally, the RuvA-RuvB-RuvC complex processes Holliday junction (HJ) DNA during genetic recombination and DNA repair. Endonuclease that resolves HJ intermediates. Cleaves cruciform DNA by making single-stranded nicks across the HJ at symmetrical positions within the homologous arms, yielding a 5'-phosphate and a 3'-hydroxyl group; requires a central core of homology in the junction. The consensus cleavage sequence is 5'-(A/T)TT(C/G)-3'. Cleavage occurs on the 3'-side of the TT dinucleotide at the point of strand exchange. HJ branch migration catalyzed by RuvA-RuvB allows RuvC to scan DNA until it finds its consensus sequence, where it cleaves and resolves the cruciform DNA. In Cupriavidus pinatubonensis (strain JMP 134 / LMG 1197) (Cupriavidus necator (strain JMP 134)), this protein is Crossover junction endodeoxyribonuclease RuvC.